Here is a 388-residue protein sequence, read N- to C-terminus: 1D-myo-inositol 2-acetamido-2-deoxy-alpha-D-glucopyranoside deacetylase (388 aa).

The Zn(2+) site is built by His-6, Asp-9, and His-144. Positions 369-388 (LDQADEGAAHDTSEQSGQRR) are disordered.

Belongs to the MshB deacetylase family. Zn(2+) serves as cofactor.

The enzyme catalyses 1D-myo-inositol 2-acetamido-2-deoxy-alpha-D-glucopyranoside + H2O = 1D-myo-inositol 2-amino-2-deoxy-alpha-D-glucopyranoside + acetate. Catalyzes the deacetylation of 1D-myo-inositol 2-acetamido-2-deoxy-alpha-D-glucopyranoside (GlcNAc-Ins) in the mycothiol biosynthesis pathway. The polypeptide is 1D-myo-inositol 2-acetamido-2-deoxy-alpha-D-glucopyranoside deacetylase (Corynebacterium kroppenstedtii (strain DSM 44385 / JCM 11950 / CIP 105744 / CCUG 35717)).